An 80-amino-acid chain; its full sequence is Peroxidase (80 aa).

Residues 56–80 are disordered; the sequence is DANEAEANSDLPGFNSSRSELEAAF. Pro-67 serves as a coordination point for substrate. Residue Asn-70 is glycosylated (N-linked (GlcNAc...) asparagine).

The protein belongs to the peroxidase family. Classical plant (class III) peroxidase subfamily. The cofactor is Ca(2+). It depends on heme b as a cofactor.

The enzyme catalyses 2 a phenolic donor + H2O2 = 2 a phenolic radical donor + 2 H2O. Functionally, removal of H(2)O(2), oxidation of toxic reductants, biosynthesis and degradation of lignin, suberization, auxin catabolism, response to environmental stresses such as wounding, pathogen attack and oxidative stress. These functions might be dependent on each isozyme/isoform in each plant tissue. In Triticum aestivum (Wheat), this protein is Peroxidase.